Consider the following 84-residue polypeptide: uncharacterized protein (84 aa).

This is an uncharacterized protein from Caenorhabditis elegans.